A 388-amino-acid polypeptide reads, in one-letter code: Quinolone resistance protein NorA (388 aa).

Transmembrane regions (helical) follow at residues 5–25 (IFVL…VIPV), 42–62 (LLVA…GTLA), 69–89 (LIIC…AVGH), 99–119 (VIGG…IADI), 129–149 (FGYM…IGGF), 157–177 (MPFY…IVLI), 201–221 (WKVF…LSAF), 239–259 (DISI…IYFF), 269–289 (LTFI…LVFA), 293–313 (WSIM…RPAI), 331–351 (LNST…GALF), and 355–375 (IEAP…IVLI).

This sequence belongs to the major facilitator superfamily. TCR/Tet family.

It localises to the cell membrane. In terms of biological role, involved in quinolone resistance. May constitute a membrane-associated active efflux pump of hydrophilic quinolones. This is Quinolone resistance protein NorA (norA) from Staphylococcus aureus (strain Mu50 / ATCC 700699).